We begin with the raw amino-acid sequence, 162 residues long: NADH-quinone oxidoreductase subunit I (162 aa).

2 consecutive 4Fe-4S ferredoxin-type domains span residues 52–82 (LRRYPNGEERCIACKLCEAICPAQAITIEAG) and 93–122 (TRYDIDMVKCIYCGMCQEACPVDAIVEGPN). Cys62, Cys65, Cys68, Cys72, Cys102, Cys105, Cys108, and Cys112 together coordinate [4Fe-4S] cluster.

The protein belongs to the complex I 23 kDa subunit family. NDH-1 is composed of 14 different subunits. Subunits NuoA, H, J, K, L, M, N constitute the membrane sector of the complex. [4Fe-4S] cluster is required as a cofactor.

Its subcellular location is the cell inner membrane. The catalysed reaction is a quinone + NADH + 5 H(+)(in) = a quinol + NAD(+) + 4 H(+)(out). Functionally, NDH-1 shuttles electrons from NADH, via FMN and iron-sulfur (Fe-S) centers, to quinones in the respiratory chain. The immediate electron acceptor for the enzyme in this species is believed to be ubiquinone. Couples the redox reaction to proton translocation (for every two electrons transferred, four hydrogen ions are translocated across the cytoplasmic membrane), and thus conserves the redox energy in a proton gradient. The sequence is that of NADH-quinone oxidoreductase subunit I from Methylobacterium nodulans (strain LMG 21967 / CNCM I-2342 / ORS 2060).